A 253-amino-acid polypeptide reads, in one-letter code: 3-deoxy-manno-octulosonate cytidylyltransferase (253 aa).

It belongs to the KdsB family.

The protein localises to the cytoplasm. It catalyses the reaction 3-deoxy-alpha-D-manno-oct-2-ulosonate + CTP = CMP-3-deoxy-beta-D-manno-octulosonate + diphosphate. The protein operates within nucleotide-sugar biosynthesis; CMP-3-deoxy-D-manno-octulosonate biosynthesis; CMP-3-deoxy-D-manno-octulosonate from 3-deoxy-D-manno-octulosonate and CTP: step 1/1. Its pathway is bacterial outer membrane biogenesis; lipopolysaccharide biosynthesis. Functionally, activates KDO (a required 8-carbon sugar) for incorporation into bacterial lipopolysaccharide in Gram-negative bacteria. This Acinetobacter baumannii (strain SDF) protein is 3-deoxy-manno-octulosonate cytidylyltransferase.